The chain runs to 314 residues: MVKKNFIPSVSLVRRDLPTLVTTTTSSTALSKPTSSVVSETSSKSLPSLTSSAFSTSSGTTSSSSLIVASITPPSTVGNPFILNAADKPNGTVYIAVGAVIGAIFISILIWWLVSNYLSRRFTMTNSYANDSKNLYRGHHKHSSSLQSNPFDINDEKSYMQDDWDSMSQLESSQYEDAASPFNPIQDPFTDNRRSLFISPTLQVSQYEKSHSRHQSKDTNIFIDDPSLYVGTYLEEEEEEERKLNLNRPQRAASPERKEKKINSMEGYHKRNQSSLGLIPVASATSNTSSPKKAHKRQAPSMFLDDVLNGREII.

A disordered region spans residues 32–61; that stretch reads KPTSSVVSETSSKSLPSLTSSAFSTSSGTT. A helical membrane pass occupies residues 93-113; it reads VYIAVGAVIGAIFISILIWWL. A phosphoserine mark is found at S148, S254, and S274. The disordered stretch occupies residues 240 to 309; it reads EERKLNLNRP…PSMFLDDVLN (70 aa). Basic and acidic residues predominate over residues 254–269; the sequence is SPERKEKKINSMEGYH.

The protein belongs to the PRM5 family.

Its subcellular location is the vacuole membrane. This chain is Vacuolar membrane protein SCY_4732, found in Saccharomyces cerevisiae (strain YJM789) (Baker's yeast).